The primary structure comprises 33 residues: Tail virion protein G9P (33 aa).

A helical transmembrane segment spans residues 5-25 (VGSFLGAYFLGFALFYGIGFF).

This sequence belongs to the inovirus G9P protein family.

Its subcellular location is the virion. The protein resides in the host membrane. Its function is as follows. May initiate with G7P the virion concomitant assembly-budding process, by interacting with the packaging signal of the viral genome. The assembly-budding takes place at the host inner membrane. In turn, G7P and G9P are present at the end of the filamentous virion that emerges first from the bacterial host. This is Tail virion protein G9P (IX) from Salmonella phage IKe (Bacteriophage IKe).